Consider the following 463-residue polypeptide: Aromatic amino acid transport protein AroP (463 aa).

Helical transmembrane passes span 18–38, 40–60, 84–104, 117–137, 157–177, 200–220, 237–257, 276–296, 337–357, 358–378, 402–422, and 431–451; these read TMMG…GVGI, AAGP…VLVM, FGHW…IMVM, AWFG…FAVV, VAVI…WLPG, VAAG…VTIA, AVIW…TFLM, ILAM…IVLA, AVLL…WNPA, GLLD…WAMI, AHPW…ALML, and VYSV…TVNS.

Belongs to the amino acid-polyamine-organocation (APC) superfamily. Amino acid transporter (AAT) (TC 2.A.3.1) family.

It is found in the cell membrane. The enzyme catalyses L-phenylalanine(in) + H(+)(in) = L-phenylalanine(out) + H(+)(out). It catalyses the reaction L-tryptophan(in) + H(+)(in) = L-tryptophan(out) + H(+)(out). It carries out the reaction L-tyrosine(in) + H(+)(in) = L-tyrosine(out) + H(+)(out). Functionally, permease that is involved in the active transport across the cytoplasmic membrane of all three aromatic amino acids, phenylalanine, tyrosine and tryptophan. This Corynebacterium glutamicum (strain ATCC 13032 / DSM 20300 / JCM 1318 / BCRC 11384 / CCUG 27702 / LMG 3730 / NBRC 12168 / NCIMB 10025 / NRRL B-2784 / 534) protein is Aromatic amino acid transport protein AroP.